The following is a 520-amino-acid chain: Sterile alpha motif domain-containing protein 3 (520 aa).

The region spanning 4–71 (WSVDQVCKWL…KYKQGNQELK (68 aa)) is the SAM domain. A disordered region spans residues 67-104 (NQELKPTGGPADTSTLTPAQAAPEHEQNPSPTSHGDQT). The segment covering 94-104 (NPSPTSHGDQT) has biased composition (polar residues).

In Mus musculus (Mouse), this protein is Sterile alpha motif domain-containing protein 3 (Samd3).